Here is a 359-residue protein sequence, read N- to C-terminus: Probable dual-specificity RNA methyltransferase RlmN (359 aa).

Glu-91 acts as the Proton acceptor in catalysis. The region spanning 97–329 (QHYGHSVCVT…KKNGVNCVVR (233 aa)) is the Radical SAM core domain. The cysteines at positions 104 and 340 are disulfide-linked. [4Fe-4S] cluster is bound by residues Cys-111, Cys-115, and Cys-118. Residues 163 to 164 (GE), Ser-195, 218 to 220 (SLH), and Asn-296 contribute to the S-adenosyl-L-methionine site. Cys-340 acts as the S-methylcysteine intermediate in catalysis.

It belongs to the radical SAM superfamily. RlmN family. The cofactor is [4Fe-4S] cluster.

The protein resides in the cytoplasm. It carries out the reaction adenosine(2503) in 23S rRNA + 2 reduced [2Fe-2S]-[ferredoxin] + 2 S-adenosyl-L-methionine = 2-methyladenosine(2503) in 23S rRNA + 5'-deoxyadenosine + L-methionine + 2 oxidized [2Fe-2S]-[ferredoxin] + S-adenosyl-L-homocysteine. The catalysed reaction is adenosine(37) in tRNA + 2 reduced [2Fe-2S]-[ferredoxin] + 2 S-adenosyl-L-methionine = 2-methyladenosine(37) in tRNA + 5'-deoxyadenosine + L-methionine + 2 oxidized [2Fe-2S]-[ferredoxin] + S-adenosyl-L-homocysteine. In terms of biological role, specifically methylates position 2 of adenine 2503 in 23S rRNA and position 2 of adenine 37 in tRNAs. This chain is Probable dual-specificity RNA methyltransferase RlmN, found in Streptococcus pyogenes serotype M3 (strain ATCC BAA-595 / MGAS315).